The primary structure comprises 392 residues: Probable protein phosphatase 2C 29 (392 aa).

Residues 44–353 (DYSVAVAQAN…DDITVVVLFL (310 aa)) enclose the PPM-type phosphatase domain. Mn(2+) contacts are provided by D75, G76, D285, and D344. The tract at residues 360-392 (AGRGDEIDGTDGPVDVFSLSPDDREDPTRPVLR) is disordered.

The protein belongs to the PP2C family. Mg(2+) serves as cofactor. Mn(2+) is required as a cofactor.

It catalyses the reaction O-phospho-L-seryl-[protein] + H2O = L-seryl-[protein] + phosphate. The enzyme catalyses O-phospho-L-threonyl-[protein] + H2O = L-threonyl-[protein] + phosphate. In Oryza sativa subsp. japonica (Rice), this protein is Probable protein phosphatase 2C 29.